A 71-amino-acid polypeptide reads, in one-letter code: Antimicrobial peptide VpCT4 (71 aa).

A signal peptide spans 1–23 (MKTQFVILIVAIVILQLISQSEA). A Leucine amide modification is found at Leu39. Positions 40–71 (GKRGVQNMDQFDDIFEPELSEADLRYLQDLLR) are excised as a propeptide.

This sequence belongs to the non-disulfide-bridged peptide (NDBP) superfamily. Short antimicrobial peptide (group 4) family. Expressed by the venom gland.

The protein localises to the secreted. It localises to the target cell membrane. Antimicrobial peptide with potent activity against bacteria S.aureus (MIC=9.3 uM), weak activity against E.coli (MIC&gt;100 uM), and weak activity against pathogenic yeasts C.albicans (MIC=100 uM) and C.glabrata (MIC=100 uM). Is not very effective against P.aeruginosa (MIC&gt;300 uM). Also provokes high hemolysis on human erythrocytes (HC(50)=4.8 uM). This Mesomexovis punctatus (Scorpion) protein is Antimicrobial peptide VpCT4.